The primary structure comprises 426 residues: Serine--tRNA ligase (426 aa).

Residue 233–235 (TSE) participates in L-serine binding. ATP is bound at residue 264–266 (RSE). An L-serine-binding site is contributed by glutamate 287. 351-354 (EISS) provides a ligand contact to ATP. Serine 387 is a binding site for L-serine.

Belongs to the class-II aminoacyl-tRNA synthetase family. Type-1 seryl-tRNA synthetase subfamily. Homodimer. The tRNA molecule binds across the dimer.

Its subcellular location is the cytoplasm. It catalyses the reaction tRNA(Ser) + L-serine + ATP = L-seryl-tRNA(Ser) + AMP + diphosphate + H(+). The enzyme catalyses tRNA(Sec) + L-serine + ATP = L-seryl-tRNA(Sec) + AMP + diphosphate + H(+). The protein operates within aminoacyl-tRNA biosynthesis; selenocysteinyl-tRNA(Sec) biosynthesis; L-seryl-tRNA(Sec) from L-serine and tRNA(Sec): step 1/1. Functionally, catalyzes the attachment of serine to tRNA(Ser). Is also able to aminoacylate tRNA(Sec) with serine, to form the misacylated tRNA L-seryl-tRNA(Sec), which will be further converted into selenocysteinyl-tRNA(Sec). This Colwellia psychrerythraea (strain 34H / ATCC BAA-681) (Vibrio psychroerythus) protein is Serine--tRNA ligase.